Reading from the N-terminus, the 452-residue chain is Phosphatidylinositol N-acetylglucosaminyltransferase GPI3 subunit (452 aa).

A helical membrane pass occupies residues 407–427; sequence LYLLCGIVEYMLFFLLEWLYP.

Belongs to the glycosyltransferase group 1 family. Component of the phosphatidylinositol N-acetylglucosaminyltransferase complex composed of at least GPI1, GPI2, GPI3, GPI15, GPI19 and ERI1.

The protein resides in the endoplasmic reticulum membrane. It catalyses the reaction a 1,2-diacyl-sn-glycero-3-phospho-(1D-myo-inositol) + UDP-N-acetyl-alpha-D-glucosamine = a 6-(N-acetyl-alpha-D-glucosaminyl)-1-(1,2-diacyl-sn-glycero-3-phospho)-1D-myo-inositol + UDP + H(+). The protein operates within glycolipid biosynthesis; glycosylphosphatidylinositol-anchor biosynthesis. With respect to regulation, inhibited by Ras, probably via the interaction between RAS2 and ERI1. In terms of biological role, catalytic subunit in the complex catalyzing the transfer of N-acetylglucosamine from UDP-N-acetylglucosamine to phosphatidylinositol, the first step of GPI biosynthesis. This chain is Phosphatidylinositol N-acetylglucosaminyltransferase GPI3 subunit (SPT14), found in Saccharomyces cerevisiae (strain YJM789) (Baker's yeast).